The primary structure comprises 377 residues: Nitric oxide reductase FlRd-NAD(+) reductase (377 aa).

This sequence belongs to the FAD-dependent oxidoreductase family. Requires FAD as cofactor.

It localises to the cytoplasm. It catalyses the reaction 2 reduced [nitric oxide reductase rubredoxin domain] + NAD(+) + H(+) = 2 oxidized [nitric oxide reductase rubredoxin domain] + NADH. Its pathway is nitrogen metabolism; nitric oxide reduction. Its function is as follows. One of at least two accessory proteins for anaerobic nitric oxide (NO) reductase. Reduces the rubredoxin moiety of NO reductase. The polypeptide is Nitric oxide reductase FlRd-NAD(+) reductase (Salmonella paratyphi A (strain AKU_12601)).